A 234-amino-acid chain; its full sequence is Glycerol-3-phosphate acyltransferase (234 aa).

6 consecutive transmembrane segments (helical) span residues 4–24, 56–76, 90–110, 122–142, 152–172, and 191–211; these read LLAI…LIAG, TVTL…VAFF, VALR…TVFA, AGML…VFLL, VASI…KYLF, and FHDS…IAII.

The protein belongs to the PlsY family. As to quaternary structure, probably interacts with PlsX.

Its subcellular location is the cell inner membrane. The enzyme catalyses an acyl phosphate + sn-glycerol 3-phosphate = a 1-acyl-sn-glycero-3-phosphate + phosphate. It participates in lipid metabolism; phospholipid metabolism. Its function is as follows. Catalyzes the transfer of an acyl group from acyl-phosphate (acyl-PO(4)) to glycerol-3-phosphate (G3P) to form lysophosphatidic acid (LPA). This enzyme utilizes acyl-phosphate as fatty acyl donor, but not acyl-CoA or acyl-ACP. The sequence is that of Glycerol-3-phosphate acyltransferase from Chlorobium chlorochromatii (strain CaD3).